The primary structure comprises 121 residues: Cell division protein FtsB (121 aa).

Over 1–6 (MRNWRW) the chain is Cytoplasmic. A helical membrane pass occupies residues 7–24 (LLLVLAVLLAWLQYRFWF). Residues 25–121 (GPGNSGEVMM…PEPVDPVDHP (97 aa)) are Periplasmic-facing. Positions 31 to 66 (EVMMLEAQVAHQTQDNEGLRQRNQALAAEVKDLKDG) form a coiled coil. Positions 98–121 (APASAEASAPAQQAPEPVDPVDHP) are disordered. The segment covering 99–113 (PASAEASAPAQQAPE) has biased composition (low complexity).

This sequence belongs to the FtsB family. As to quaternary structure, part of a complex composed of FtsB, FtsL and FtsQ.

It localises to the cell inner membrane. Functionally, essential cell division protein. May link together the upstream cell division proteins, which are predominantly cytoplasmic, with the downstream cell division proteins, which are predominantly periplasmic. This chain is Cell division protein FtsB, found in Xanthomonas axonopodis pv. citri (strain 306).